The primary structure comprises 110 residues: MASSSGQNGIQLLLAAEQEAQHIVNNARTAKQARLKQAKEEAEKEIAEFRAYMEAEFQRKLEQTSGDSGANVKRLEQETDAKIEHLKTEAERVSPDVVQMLLRHVTTVKN.

The protein belongs to the V-ATPase G subunit family. V-ATPase is a heteromultimeric enzyme composed of a peripheral catalytic V1 complex (components A to H) attached to an integral membrane V0 proton pore complex (components: a, c, c', c'' and d).

Functionally, catalytic subunit of the peripheral V1 complex of vacuolar ATPase (V-ATPase). V-ATPase is responsible for acidifying a variety of intracellular compartments in eukaryotic cells. In Nicotiana tabacum (Common tobacco), this protein is V-type proton ATPase subunit G 1 (VATG1).